A 377-amino-acid chain; its full sequence is Nitric oxide reductase FlRd-NAD(+) reductase (377 aa).

It belongs to the FAD-dependent oxidoreductase family. FAD serves as cofactor.

It localises to the cytoplasm. The enzyme catalyses 2 reduced [nitric oxide reductase rubredoxin domain] + NAD(+) + H(+) = 2 oxidized [nitric oxide reductase rubredoxin domain] + NADH. Its pathway is nitrogen metabolism; nitric oxide reduction. Its function is as follows. One of at least two accessory proteins for anaerobic nitric oxide (NO) reductase. Reduces the rubredoxin moiety of NO reductase. The polypeptide is Nitric oxide reductase FlRd-NAD(+) reductase (Escherichia coli O157:H7).